The sequence spans 291 residues: 4-diphosphocytidyl-2-C-methyl-D-erythritol kinase (291 aa).

Lys21 is a catalytic residue. 104–114 (PMGGGLGGGSS) provides a ligand contact to ATP. Asp146 is an active-site residue.

The protein belongs to the GHMP kinase family. IspE subfamily.

The catalysed reaction is 4-CDP-2-C-methyl-D-erythritol + ATP = 4-CDP-2-C-methyl-D-erythritol 2-phosphate + ADP + H(+). It functions in the pathway isoprenoid biosynthesis; isopentenyl diphosphate biosynthesis via DXP pathway; isopentenyl diphosphate from 1-deoxy-D-xylulose 5-phosphate: step 3/6. Its function is as follows. Catalyzes the phosphorylation of the position 2 hydroxy group of 4-diphosphocytidyl-2C-methyl-D-erythritol. In Methylococcus capsulatus (strain ATCC 33009 / NCIMB 11132 / Bath), this protein is 4-diphosphocytidyl-2-C-methyl-D-erythritol kinase.